The primary structure comprises 527 residues: Amine oxidase [flavin-containing] A (527 aa).

The residue at position 1 (M1) is an N-acetylmethionine. Residues 1–497 (MASQEKASMA…HSFWERNLPS (497 aa)) are Cytoplasmic-facing. S383 bears the Phosphoserine mark. The residue at position 406 (C406) is an S-8alpha-FAD cysteine. A helical; Anchor for type IV membrane protein membrane pass occupies residues 498–518 (VGGLLKIIGFSTSITALWIVV). Residues 519–527 (YKFKLLTRS) lie on the Mitochondrial intermembrane side of the membrane. Residues 520–522 (KFK) are interaction with membrane phospholipid headgroups.

This sequence belongs to the flavin monoamine oxidase family. Monomer, homo- or heterodimer (containing two subunits of similar size). Each subunit contains a covalently bound flavin. Enzymatically active as monomer. FAD serves as cofactor.

Its subcellular location is the mitochondrion outer membrane. The enzyme catalyses a secondary aliphatic amine + O2 + H2O = a primary amine + an aldehyde + H2O2. It carries out the reaction a primary methyl amine + O2 + H2O = an aldehyde + H2O2 + NH4(+). The catalysed reaction is (R)-adrenaline + O2 + H2O = (R)-3,4-dihydroxymandelaldehyde + methylamine + H2O2. It catalyses the reaction dopamine + O2 + H2O = 3,4-dihydroxyphenylacetaldehyde + H2O2 + NH4(+). The enzyme catalyses tyramine + O2 + H2O = (4-hydroxyphenyl)acetaldehyde + H2O2 + NH4(+). It carries out the reaction (R)-noradrenaline + O2 + H2O = (R)-3,4-dihydroxymandelaldehyde + H2O2 + NH4(+). The catalysed reaction is serotonin + O2 + H2O = (5-hydroxyindol-3-yl)acetaldehyde + H2O2 + NH4(+). It catalyses the reaction kynuramine + O2 + H2O = 3-(2-aminophenyl)-3-oxopropanal + H2O2 + NH4(+). The enzyme catalyses tryptamine + O2 + H2O = indole-3-acetaldehyde + H2O2 + NH4(+). It carries out the reaction 2-phenylethylamine + O2 + H2O = 2-phenylacetaldehyde + H2O2 + NH4(+). Functionally, catalyzes the oxidative deamination of primary and some secondary amine such as neurotransmitters, with concomitant reduction of oxygen to hydrogen peroxide and has important functions in the metabolism of neuroactive and vasoactive amines in the central nervous system and peripheral tissues. Preferentially oxidizes serotonin. Also catalyzes the oxidative deamination of kynuramine to 3-(2-aminophenyl)-3-oxopropanal that can spontaneously condense to 4-hydroxyquinoline. The sequence is that of Amine oxidase [flavin-containing] A from Equus caballus (Horse).